The chain runs to 466 residues: GTPase Der (466 aa).

2 EngA-type G domains span residues Pro-3–Pro-166 and Ile-177–Thr-350. GTP is bound by residues Gly-9 to Ser-16, Asp-56 to Ile-60, Asn-118 to Asp-121, Gly-183 to Ser-190, Asp-230 to Val-234, and Asn-295 to Asp-298. Residues Asp-351–Asp-435 enclose the KH-like domain. The tract at residues Lys-442–Arg-466 is disordered. Residues Arg-455–Arg-466 are compositionally biased toward basic and acidic residues.

This sequence belongs to the TRAFAC class TrmE-Era-EngA-EngB-Septin-like GTPase superfamily. EngA (Der) GTPase family. As to quaternary structure, associates with the 50S ribosomal subunit.

Functionally, GTPase that plays an essential role in the late steps of ribosome biogenesis. This chain is GTPase Der, found in Cellvibrio japonicus (strain Ueda107) (Pseudomonas fluorescens subsp. cellulosa).